The chain runs to 102 residues: Small ribosomal subunit protein uS10 (102 aa).

It belongs to the universal ribosomal protein uS10 family. In terms of assembly, part of the 30S ribosomal subunit.

In terms of biological role, involved in the binding of tRNA to the ribosomes. The chain is Small ribosomal subunit protein uS10 from Methylorubrum populi (strain ATCC BAA-705 / NCIMB 13946 / BJ001) (Methylobacterium populi).